The sequence spans 166 residues: NAD(P)H-quinone oxidoreductase subunit I, chloroplastic (166 aa).

4Fe-4S ferredoxin-type domains are found at residues 55 to 84 (GRIH…VDWQ) and 95 to 124 (VNYS…MTEE). [4Fe-4S] cluster is bound by residues C64, C67, C70, C74, C104, C107, C110, and C114.

This sequence belongs to the complex I 23 kDa subunit family. In terms of assembly, NDH is composed of at least 16 different subunits, 5 of which are encoded in the nucleus. The cofactor is [4Fe-4S] cluster.

Its subcellular location is the plastid. The protein localises to the chloroplast thylakoid membrane. It catalyses the reaction a plastoquinone + NADH + (n+1) H(+)(in) = a plastoquinol + NAD(+) + n H(+)(out). The catalysed reaction is a plastoquinone + NADPH + (n+1) H(+)(in) = a plastoquinol + NADP(+) + n H(+)(out). NDH shuttles electrons from NAD(P)H:plastoquinone, via FMN and iron-sulfur (Fe-S) centers, to quinones in the photosynthetic chain and possibly in a chloroplast respiratory chain. The immediate electron acceptor for the enzyme in this species is believed to be plastoquinone. Couples the redox reaction to proton translocation, and thus conserves the redox energy in a proton gradient. In Coreopsis petrophiloides (Tickseed), this protein is NAD(P)H-quinone oxidoreductase subunit I, chloroplastic.